The sequence spans 297 residues: Homoserine kinase (297 aa).

Position 82 to 92 (82 to 92 (PVSRGLGSSAA)) interacts with ATP.

Belongs to the GHMP kinase family. Homoserine kinase subfamily.

The protein localises to the cytoplasm. It catalyses the reaction L-homoserine + ATP = O-phospho-L-homoserine + ADP + H(+). It functions in the pathway amino-acid biosynthesis; L-threonine biosynthesis; L-threonine from L-aspartate: step 4/5. Functionally, catalyzes the ATP-dependent phosphorylation of L-homoserine to L-homoserine phosphate. This chain is Homoserine kinase, found in Clostridium botulinum (strain Okra / Type B1).